A 353-amino-acid chain; its full sequence is NADH-quinone oxidoreductase subunit H (353 aa).

The next 9 helical transmembrane spans lie at 8–28, 75–95, 108–128, 148–168, 178–198, 229–249, 258–278, 297–317, and 319–339; these read LLVY…LFIW, GVFW…FAAI, IGIL…FMAG, VSYE…TGSL, SVPF…AAMA, LFYL…TTLF, LHPV…IIWV, FLLP…LAAP, and MNTA…ILLF.

Belongs to the complex I subunit 1 family. As to quaternary structure, NDH-1 is composed of 14 different subunits. Subunits NuoA, H, J, K, L, M, N constitute the membrane sector of the complex.

It is found in the cell membrane. The catalysed reaction is a quinone + NADH + 5 H(+)(in) = a quinol + NAD(+) + 4 H(+)(out). Functionally, NDH-1 shuttles electrons from NADH, via FMN and iron-sulfur (Fe-S) centers, to quinones in the respiratory chain. The immediate electron acceptor for the enzyme in this species is believed to be ubiquinone. Couples the redox reaction to proton translocation (for every two electrons transferred, four hydrogen ions are translocated across the cytoplasmic membrane), and thus conserves the redox energy in a proton gradient. This subunit may bind ubiquinone. This Dehalococcoides mccartyi (strain ATCC BAA-2266 / KCTC 15142 / 195) (Dehalococcoides ethenogenes (strain 195)) protein is NADH-quinone oxidoreductase subunit H.